Consider the following 273-residue polypeptide: Elongator complex protein 6 (273 aa).

The protein belongs to the ELP6 family. As to quaternary structure, component of the elongator complex which consists of ELP1/IKI3, ELP2, ELP3, ELP4, ELP5/IKI1 and ELP6. The elongator complex is composed of two copies of the Elp123 subcomplex (composed of ELP1/IKI3, ELP2 and ELP3) and two copies of the Elp456 subcomplex (composed of ELP4, ELP5/IKI1 and ELP6). The Elp123 subcomplex forms a two-lobed scaffold, which binds the Elp456 subcomplex asymmetrically. In each lobe, ELP2 is tightly sandwiched between ELP1/IKI3 and ELP3. The Elp123 subcomplex binds tRNA through ELP1/IKI3 and ELP3 and can bind 2 tRNAs simultaneously. tRNA-binding by the Elp123 subcomplex induces conformational rearrangements which precisely position the targeted anticodon base in the active site. The Elp456 subcomplex binds tRNA and has ATPase activity.

The protein localises to the cytoplasm. It localises to the nucleus. It participates in tRNA modification; 5-methoxycarbonylmethyl-2-thiouridine-tRNA biosynthesis. In terms of biological role, component of the elongator complex which is required for multiple tRNA modifications, including mcm5U (5-methoxycarbonylmethyl uridine), mcm5s2U (5-methoxycarbonylmethyl-2-thiouridine), and ncm5U (5-carbamoylmethyl uridine). The elongator complex catalyzes formation of carboxymethyluridine in the wobble base at position 34 in tRNAs. It functions as a gamma-toxin target (TOT); disruption of the complex confers resistance to Kluyveromyces lactis toxin zymocin (pGKL1 killer toxin). May also be involved in sensitivity to Pichia inositovora toxin. This is Elongator complex protein 6 (ELP6) from Saccharomyces cerevisiae (strain ATCC 204508 / S288c) (Baker's yeast).